We begin with the raw amino-acid sequence, 515 residues long: 2-isopropylmalate synthase (515 aa).

Residues 5 to 267 form the Pyruvate carboxyltransferase domain; it reads VIIFDTTLRD…DTRINTQEIH (263 aa). Asp-14, His-202, His-204, and Asn-238 together coordinate Mn(2+). Positions 392 to 515 are regulatory domain; it reads VLDKLSAHST…VADIKSHKHH (124 aa).

It belongs to the alpha-IPM synthase/homocitrate synthase family. LeuA type 1 subfamily. As to quaternary structure, homodimer. Requires Mn(2+) as cofactor.

It localises to the cytoplasm. It catalyses the reaction 3-methyl-2-oxobutanoate + acetyl-CoA + H2O = (2S)-2-isopropylmalate + CoA + H(+). Its pathway is amino-acid biosynthesis; L-leucine biosynthesis; L-leucine from 3-methyl-2-oxobutanoate: step 1/4. Functionally, catalyzes the condensation of the acetyl group of acetyl-CoA with 3-methyl-2-oxobutanoate (2-ketoisovalerate) to form 3-carboxy-3-hydroxy-4-methylpentanoate (2-isopropylmalate). In Haemophilus influenzae (strain 86-028NP), this protein is 2-isopropylmalate synthase.